Consider the following 1014-residue polypeptide: Regulator of telomere elongation helicase 1 homolog (1014 aa).

Positions 7 to 324 (AGIPVHFPFE…KEMLLELEKA (318 aa)) constitute a Helicase ATP-binding domain. Residue 42–49 (SPTGTGKT) coordinates ATP. C147, C165, C174, and C210 together coordinate [4Fe-4S] cluster. A DEAH box motif is present at residues 253 to 256 (DEAH). T873 carries the post-translational modification Phosphothreonine. Positions 891–917 (TDMVKTEPGTSNSCSYGNTSSSGSDSR) are disordered. Positions 899–917 (GTSNSCSYGNTSSSGSDSR) are enriched in low complexity.

It belongs to the helicase family. RAD3/XPD subfamily.

The protein localises to the nucleus. It catalyses the reaction ATP + H2O = ADP + phosphate + H(+). A probable ATP-dependent DNA helicase implicated in DNA repair and the maintenance of genomic stability. Acts as an anti-recombinase to counteract toxic recombination and limit crossover during meiosis. Regulates meiotic recombination and crossover homeostasis by physically dissociating strand invasion events and thereby promotes noncrossover repair by meiotic synthesis dependent strand annealing (SDSA) as well as disassembly of D loop recombination intermediates. The protein is Regulator of telomere elongation helicase 1 homolog of Drosophila mojavensis (Fruit fly).